The chain runs to 226 residues: Urease accessory protein UreF (226 aa).

This sequence belongs to the UreF family. In terms of assembly, ureD, UreF and UreG form a complex that acts as a GTP-hydrolysis-dependent molecular chaperone, activating the urease apoprotein by helping to assemble the nickel containing metallocenter of UreC. The UreE protein probably delivers the nickel.

The protein resides in the cytoplasm. In terms of biological role, required for maturation of urease via the functional incorporation of the urease nickel metallocenter. The polypeptide is Urease accessory protein UreF (Burkholderia lata (strain ATCC 17760 / DSM 23089 / LMG 22485 / NCIMB 9086 / R18194 / 383)).